Here is a 496-residue protein sequence, read N- to C-terminus: Iroquois-class homeodomain protein irx-4-A (496 aa).

The homeobox; TALE-type DNA-binding region spans 141 to 203 (GSSRRKNATR…NARRRLKKEN (63 aa)). Positions 203 to 246 (NKMTWPPRNKCSDEKRPYDEEEEEEEEEEDSQKATIKNEKKTVD) are disordered. A compositionally biased stretch (acidic residues) spans 221–232 (DEEEEEEEEEED).

The protein belongs to the TALE/IRO homeobox family. In terms of tissue distribution, expressed in the neural plate in overlapping patterns with other irx members, which all share an anterior border of expression. At stage 20, expressed in a subset of cells in the developing hindbrain with expression appearing above the otic vesicle by stage 26. Expression in retina cells begins at stage 28, continuing at later stages and is limited to a subset of retinal cells of the optic cup. Also expressed in the ventricle of the heart from stage 36 (late tailbud) onwards. Only expressed in the pronephros at tadpole stage.

Its subcellular location is the nucleus. Functionally, acts partially redundantly with other irx members in neural patterning. Required for formation of the posterior forebrain, midbrain, hindbrain, and to a lesser extent, spinal cord. Patterns the neuroectoderm in both the anterior/posterior and dorsal/ventral axes. Does not appear to play a role in pronephros kidney development. The chain is Iroquois-class homeodomain protein irx-4-A (irx4-a) from Xenopus laevis (African clawed frog).